Consider the following 447-residue polypeptide: Asparagine--tRNA ligase (447 aa).

The protein belongs to the class-II aminoacyl-tRNA synthetase family. Homodimer.

It localises to the cytoplasm. It catalyses the reaction tRNA(Asn) + L-asparagine + ATP = L-asparaginyl-tRNA(Asn) + AMP + diphosphate + H(+). The sequence is that of Asparagine--tRNA ligase from Herpetosiphon aurantiacus (strain ATCC 23779 / DSM 785 / 114-95).